The following is a 720-amino-acid chain: Translation initiation factor IF-2 (720 aa).

The segment at 48 to 138 (KKFKASQAKD…NEVEETKEMP (91 aa)) is disordered. Composition is skewed to low complexity over residues 60–75 (KQNT…NKQN) and 99–113 (KGKQ…NKNQ). The segment covering 114–123 (KNNKNKKNNK) has biased composition (basic residues). Positions 222–391 (ERPAVVTIMG…GLVAEVQELK (170 aa)) constitute a tr-type G domain. The interval 231–238 (GHVDHGKT) is G1. 231 to 238 (GHVDHGKT) lines the GTP pocket. The segment at 256 to 260 (GITQH) is G2. Residues 277–280 (DTPG) form a G3 region. GTP contacts are provided by residues 277–281 (DTPGH) and 331–334 (NKID). The segment at 331-334 (NKID) is G4. The tract at residues 367 to 369 (SAL) is G5.

It belongs to the TRAFAC class translation factor GTPase superfamily. Classic translation factor GTPase family. IF-2 subfamily.

It is found in the cytoplasm. Functionally, one of the essential components for the initiation of protein synthesis. Protects formylmethionyl-tRNA from spontaneous hydrolysis and promotes its binding to the 30S ribosomal subunits. Also involved in the hydrolysis of GTP during the formation of the 70S ribosomal complex. The chain is Translation initiation factor IF-2 from Staphylococcus epidermidis (strain ATCC 35984 / DSM 28319 / BCRC 17069 / CCUG 31568 / BM 3577 / RP62A).